The following is a 417-amino-acid chain: Phosphoglycerate kinase (417 aa).

The (2R)-3-phosphoglycerate site is built by V23, D24, F25, N26, Q39, R40, S63, H64, G66, R67, L122, R123, H170, and R171. G214 is a binding site for ADP. G214 lines the CDP pocket. Positions 215 and 216 each coordinate AMP. An ATP-binding site is contributed by A215. A215 provides a ligand contact to Mg(2+). A CDP-binding site is contributed by D219. D219 contributes to the Mg(2+) binding site. Residue K220 coordinates AMP. K220 is an ATP binding site. Position 238 (G238) interacts with ADP. CDP is bound at residue G238. The AMP site is built by A239 and G313. Residues A239 and G313 each contribute to the ATP site. Positions 338 and 343 each coordinate CDP. Residue F343 coordinates ADP. Position 344 (E344) interacts with AMP. ATP contacts are provided by E344, D375, and T376. Residue D375 coordinates Mg(2+).

This sequence belongs to the phosphoglycerate kinase family. Monomer. Mg(2+) is required as a cofactor.

The protein resides in the cytoplasm. Its subcellular location is the mitochondrion. The enzyme catalyses (2R)-3-phosphoglycerate + ATP = (2R)-3-phospho-glyceroyl phosphate + ADP. It participates in carbohydrate degradation; glycolysis; pyruvate from D-glyceraldehyde 3-phosphate: step 2/5. In terms of biological role, catalyzes one of the two ATP producing reactions in the glycolytic pathway via the reversible conversion of 1,3-diphosphoglycerate to 3-phosphoglycerate. Both L- and D- forms of purine and pyrimidine nucleotides can be used as substrates, but the activity is much lower on pyrimidines. Negatively regulates the biosynthesis of acetyl-CoA from pyruvate in the mitochondrion. The sequence is that of Phosphoglycerate kinase (pgkA) from Aspergillus oryzae (strain ATCC 42149 / RIB 40) (Yellow koji mold).